The chain runs to 146 residues: Vascular endothelial growth factor A (146 aa).

The N-terminal stretch at 1-26 (MNFLLSWVHWSLALLLYLHHAKWSQA) is a signal peptide. 3 cysteine pairs are disulfide-bonded: C51–C93, C82–C127, and C86–C129. N100 carries N-linked (GlcNAc...) asparagine glycosylation.

Belongs to the PDGF/VEGF growth factor family. Homodimer; disulfide-linked. Also found as heterodimer with PGF. Interacts with NRP1. Interacts with isoform 2 of BSG. Interacts with CD82; this interaction inhibits VEGFA-mediated signaling pathway.

In terms of biological role, growth factor active in angiogenesis, vasculogenesis and endothelial cell growth. Induces endothelial cell proliferation, promotes cell migration, inhibits apoptosis and induces permeabilization of blood vessels. Binds to the FLT1/VEGFR1 and KDR/VEGFR2 receptors, heparan sulfate and heparin. Binding to NRP1 receptor initiates a signaling pathway needed for motor neuron axon guidance and cell body migration, including for the caudal migration of facial motor neurons from rhombomere 4 to rhombomere 6 during embryonic development. Also binds the DEAR/FBXW7-AS1 receptor. In Ovis aries (Sheep), this protein is Vascular endothelial growth factor A (VEGFA).